The primary structure comprises 124 residues: Ribosome-binding factor A (124 aa).

The protein belongs to the RbfA family. As to quaternary structure, monomer. Binds 30S ribosomal subunits, but not 50S ribosomal subunits or 70S ribosomes.

It is found in the cytoplasm. Its function is as follows. One of several proteins that assist in the late maturation steps of the functional core of the 30S ribosomal subunit. Associates with free 30S ribosomal subunits (but not with 30S subunits that are part of 70S ribosomes or polysomes). Required for efficient processing of 16S rRNA. May interact with the 5'-terminal helix region of 16S rRNA. The protein is Ribosome-binding factor A of Sorangium cellulosum (strain So ce56) (Polyangium cellulosum (strain So ce56)).